The primary structure comprises 152 residues: Transcriptional regulator MraZ (152 aa).

SpoVT-AbrB domains lie at 5-52 and 81-124; these read VNQL…PLPE and AQEL…DESL.

The protein belongs to the MraZ family. Forms oligomers.

It is found in the cytoplasm. Its subcellular location is the nucleoid. The protein is Transcriptional regulator MraZ of Halorhodospira halophila (strain DSM 244 / SL1) (Ectothiorhodospira halophila (strain DSM 244 / SL1)).